The sequence spans 142 residues: Ribosome maturation factor RimP (142 aa).

This sequence belongs to the RimP family.

It is found in the cytoplasm. Functionally, required for maturation of 30S ribosomal subunits. In Sulfurovum sp. (strain NBC37-1), this protein is Ribosome maturation factor RimP.